The primary structure comprises 253 residues: Probable transcriptional regulatory protein syc0529_d (253 aa).

Belongs to the TACO1 family.

The protein localises to the cytoplasm. The protein is Probable transcriptional regulatory protein syc0529_d of Synechococcus sp. (strain ATCC 27144 / PCC 6301 / SAUG 1402/1) (Anacystis nidulans).